The following is a 262-amino-acid chain: Pyridoxine 5'-phosphate synthase (262 aa).

Asparagine 6 is a 3-amino-2-oxopropyl phosphate binding site. 1-deoxy-D-xylulose 5-phosphate is bound at residue 8–9 (DH). 3-amino-2-oxopropyl phosphate is bound at residue arginine 17. Histidine 43 (proton acceptor) is an active-site residue. 2 residues coordinate 1-deoxy-D-xylulose 5-phosphate: arginine 45 and histidine 50. Glutamate 70 serves as the catalytic Proton acceptor. Threonine 102 serves as a coordination point for 1-deoxy-D-xylulose 5-phosphate. Histidine 215 (proton donor) is an active-site residue. 3-amino-2-oxopropyl phosphate contacts are provided by residues glycine 216 and 237-238 (GH).

This sequence belongs to the PNP synthase family. As to quaternary structure, homooctamer; tetramer of dimers.

Its subcellular location is the cytoplasm. The enzyme catalyses 3-amino-2-oxopropyl phosphate + 1-deoxy-D-xylulose 5-phosphate = pyridoxine 5'-phosphate + phosphate + 2 H2O + H(+). The protein operates within cofactor biosynthesis; pyridoxine 5'-phosphate biosynthesis; pyridoxine 5'-phosphate from D-erythrose 4-phosphate: step 5/5. Its function is as follows. Catalyzes the complicated ring closure reaction between the two acyclic compounds 1-deoxy-D-xylulose-5-phosphate (DXP) and 3-amino-2-oxopropyl phosphate (1-amino-acetone-3-phosphate or AAP) to form pyridoxine 5'-phosphate (PNP) and inorganic phosphate. The chain is Pyridoxine 5'-phosphate synthase from Helicobacter pylori (strain J99 / ATCC 700824) (Campylobacter pylori J99).